Consider the following 142-residue polypeptide: MKKRKSRTEVKAVAQYIHMSAHKARRVVDQIRGRSYEETLMILELMPYRASYPIFKLVYSAAANANHNMGFNEADSFISKAEVNEGVIVKKLNPQARGRSYTIKRSTCHITIVLKDRTKKEPTSILERRYGWVDEYKIKYSR.

This sequence belongs to the universal ribosomal protein uL22 family. Part of the 50S ribosomal subunit.

It localises to the plastid. Its subcellular location is the chloroplast. This protein binds specifically to 23S rRNA. In terms of biological role, the globular domain of the protein is located near the polypeptide exit tunnel on the outside of the subunit, while an extended beta-hairpin is found that lines the wall of the exit tunnel in the center of the 70S ribosome. This is Large ribosomal subunit protein uL22c (rpl22) from Ceratophyllum demersum (Rigid hornwort).